Consider the following 188-residue polypeptide: Capsid protein (188 aa).

This sequence belongs to the tymoviruses capsid protein family.

The protein localises to the virion. Self-assembles to form a T=3 icosahedral capsid composed of 180 copies of the capsid protein. The capsid encapsulates the single-stranded RNA genome. The chain is Capsid protein from Physalis heterophylla (PhMV).